The sequence spans 231 residues: LexA repressor (231 aa).

A DNA-binding region (H-T-H motif) is located at residues 26 to 46 (FDEMKDALDLRSKSGIHRLIT). Residues Ser152 and Lys190 each act as for autocatalytic cleavage activity in the active site.

Belongs to the peptidase S24 family. Homodimer.

The catalysed reaction is Hydrolysis of Ala-|-Gly bond in repressor LexA.. Represses a number of genes involved in the response to DNA damage (SOS response), including recA and lexA. In the presence of single-stranded DNA, RecA interacts with LexA causing an autocatalytic cleavage which disrupts the DNA-binding part of LexA, leading to derepression of the SOS regulon and eventually DNA repair. The protein is LexA repressor of Dinoroseobacter shibae (strain DSM 16493 / NCIMB 14021 / DFL 12).